Consider the following 303-residue polypeptide: uncharacterized protein (303 aa).

4 consecutive transmembrane segments (helical) span residues 102–122 (TYLL…VMAI), 132–152 (FVLF…FLFF), 184–204 (LLYF…SLIY), and 221–241 (FILL…FLLF).

The protein resides in the membrane. This is an uncharacterized protein from Dictyostelium discoideum (Social amoeba).